A 268-amino-acid chain; its full sequence is Tryptophan synthase alpha chain (268 aa).

Residues Glu-49 and Asp-60 each act as proton acceptor in the active site.

The protein belongs to the TrpA family. Tetramer of two alpha and two beta chains.

The enzyme catalyses (1S,2R)-1-C-(indol-3-yl)glycerol 3-phosphate + L-serine = D-glyceraldehyde 3-phosphate + L-tryptophan + H2O. It participates in amino-acid biosynthesis; L-tryptophan biosynthesis; L-tryptophan from chorismate: step 5/5. The alpha subunit is responsible for the aldol cleavage of indoleglycerol phosphate to indole and glyceraldehyde 3-phosphate. This is Tryptophan synthase alpha chain from Xylella fastidiosa (strain M23).